Reading from the N-terminus, the 1439-residue chain is MGARASVLSGGELDRWEKIRLRPGGKKKYRLKHIVWASRELERFAVNPGLLESSEGCRQILGQLQPSLKTGSEELTSLYNTVATLYCVHQRIEIKDTKEALEKIEEEQTKSMKKAQQAAADTGNSSQVSQNYPIVQNLQGQMVHQAISPRTLNAWVKVIEEKAFSPEVIPMFSALSEGATPQDLNTMLNTVGGHQAAMQMLKETINEEAAEWDRLHPVHAGPIAPGQMREPRGSDIAGTTSTLQEQIGWMTNNPPIPVGEIYKRWIILGLNKIVRMYSPVSILDIRQGPKEPFRDYVDRFYKTLRAEQATQEVKNWMTETLLVQNANPDCKTILKALGPAATLEEMMTACQGVGGPGHKARVLAEAMSQVTNPATIMMQRGNFRNQRKNVKCFNCGKEGHIARNCRAPRKKGCWKCGKEGHQMKECTERQANFLREDLAFLQGKAREFPSEQTRANSPTRRELQVWGRDSNSLSEAGAEAGADRQGIVSFNFPQITLWQRPLVTIKIGGQLKEALLDTGADDTVLEDMDLPGRWKPKMIGGIGGFIKVRQYDQIPIDICGHKAVGTVLVGPTPVNIIGRNLLTQIGCTLNFPISPIETVPVKLKPGMDGPKVKQWPLTEEKIKALVEICTEMEKEGKISKIGPENPYNTPVFAIKKKDSTKWRKLVDFRELNRRTQDFWEVQLGIPHPAGLKKKKSVTVLDVGDAYFSVPLDKDFRKYTAFTIPSINNETPGIRYQYNVLPQGWKGSPAIFQSSMTKILEPFRKQNPDIIIYQYMDDLYVGSDLEIGQHRTKIEELRQHLLKWGFTTPDKKHQKEPPFLWMGYELHPDKWTVQPIVLPEKDSWTVNDIQKLVGKLNWASQIYAGIKVKQLCKLLRGTKALTEVIPLTKEAELELAENREILKEPVHGVYYDPSKDLIVEIQKQGQGQWTYQIFQEPFKNLKTGKYARTRGAHTNDVKQLTEAVQKIANESIVIWGKIPKFKLPIQKETWETWWTEYWQATWIPEWEFVNTPPLVKLWYQLEKEPIVGAETFYVDGAANRETKLGKAGYVTSRGRQKVVSLTDTTNQKTELQAIHLALQDSGLEVNIVTDSQYALGIIQAQPDKSESELVSQIIEQLIKKEKVYLAWVPAHKGIGGNEQVDKLVSAGIRKVLFLDGIDKAQEDHEKYHSNWRAMASDFNLPPIVAKEIVASCDKCQLKGEAMHGQVDCSPGIWQLDCTHLEGKIILVAVHVASGYIEAEVIPAETGQETAYFLLKLAGRWPVTTIHTDNGSNFTSTTVKAACWWAGIKQEFGIPYNPQSQGVVESMNKELKKIIGQVRDQAEHLKTAVQMAVFIHNFKRKGGIGGYSAGERIIDIIATDIQTKELQKQITKIQNFRVYYRDNRDPIWKGPAKLLWKGEGAVVIQDNSDIKVVPRRKVKIIRDYGKQMAGDDCVASRQDED.

A lipid anchor (N-myristoyl glycine; by host) is attached at glycine 2. The tract at residues 7–31 (VLSGGELDRWEKIRLRPGGKKKYRL) is interaction with Gp41. Residues 8–43 (LSGGELDRWEKIRLRPGGKKKYRLKHIVWASRELER) form an interaction with host CALM1 region. The tract at residues 12-19 (ELDRWEKI) is interaction with host AP3D1. The tract at residues 14–33 (DRWEKIRLRPGGKKKYRLKH) is interaction with membrane phosphatidylinositol 4,5-bisphosphate and RNA. The Nuclear export signal motif lies at 16–22 (WEKIRLR). A Nuclear localization signal motif is present at residues 26–32 (KKKYRLK). Residues 73-77 (EELTS) are interaction with membrane phosphatidylinositol 4,5-bisphosphate. The interval 106 to 128 (EEQTKSMKKAQQAAADTGNSSQV) is disordered. Tyrosine 132 is modified (phosphotyrosine; by host). Residues 189 to 227 (NTVGGHQAAMQMLKETINEEAAEWDRLHPVHAGPIAPGQ) form an interaction with human PPIA/CYPA and NUP153 region. The tract at residues 277-363 (YSPVSILDIR…GGPGHKARVL (87 aa)) is dimerization/Multimerization of capsid protein p24. CCHC-type zinc fingers lie at residues 390 to 407 (VKCFNCGKEGHIARNCRA) and 411 to 428 (KGCWKCGKEGHQMKECTE). Positions 493–497 (PQITL) are dimerization of protease. One can recognise a Peptidase A2 domain in the interval 512–581 (KEALLDTGAD…TPVNIIGRNL (70 aa)). Aspartate 517 (for protease activity; shared with dimeric partner) is an active-site residue. Dimerization of protease regions lie at residues 541 to 547 (GIGGFIK) and 580 to 592 (NLLTQIGCTLNFP). The Reverse transcriptase domain occupies 635 to 825 (EGKISKIGPE…PPFLWMGYEL (191 aa)). Mg(2+) is bound by residues aspartate 701, aspartate 776, and aspartate 777. Positions 818–826 (FLWMGYELH) are RT 'primer grip'. The Tryptophan repeat motif signature appears at 989-1005 (WETWWTEYWQATWIPEW). Positions 1025-1148 (IVGAETFYVD…VDKLVSAGIR (124 aa)) constitute an RNase H type-1 domain. 4 residues coordinate Mg(2+): aspartate 1034, glutamate 1069, aspartate 1089, and aspartate 1140. The Integrase-type zinc finger occupies 1154–1195 (DGIDKAQEDHEKYHSNWRAMASDFNLPPIVAKEIVASCDKCQ). Histidine 1163, histidine 1167, cysteine 1191, and cysteine 1194 together coordinate Zn(2+). Positions 1205–1355 (VDCSPGIWQL…SAGERIIDII (151 aa)) constitute an Integrase catalytic domain. The Mg(2+) site is built by aspartate 1215, aspartate 1267, and glutamate 1303. Residues 1374–1421 (FRVYYRDNRDPIWKGPAKLLWKGEGAVVIQDNSDIKVVPRRKVKIIRD) constitute a DNA-binding region (integrase-type).

In terms of assembly, homotrimer; further assembles as hexamers of trimers. Interacts with gp41 (via C-terminus). Interacts with host CALM1; this interaction induces a conformational change in the Matrix protein, triggering exposure of the myristate group. Interacts with host AP3D1; this interaction allows the polyprotein trafficking to multivesicular bodies during virus assembly. Part of the pre-integration complex (PIC) which is composed of viral genome, matrix protein, Vpr and integrase. Homodimer; the homodimer further multimerizes as homohexamers or homopentamers. Interacts with human PPIA/CYPA; This interaction stabilizes the capsid. Interacts with human NUP153. Interacts with host PDZD8; this interaction stabilizes the capsid. Interacts with monkey TRIM5; this interaction destabilizes the capsid. As to quaternary structure, homodimer, whose active site consists of two apposed aspartic acid residues. In terms of assembly, heterodimer of p66 RT and p51 RT (RT p66/p51). Heterodimerization of RT is essential for DNA polymerase activity. The overall folding of the subdomains is similar in p66 RT and p51 RT but the spatial arrangements of the subdomains are dramatically different. Homotetramer; may further associate as a homohexadecamer. Part of the pre-integration complex (PIC) which is composed of viral genome, matrix protein, Vpr and integrase. Interacts with human SMARCB1/INI1 and human PSIP1/LEDGF isoform 1. Interacts with human KPNA3; this interaction might play a role in nuclear import of the pre-integration complex. Interacts with human NUP153; this interaction might play a role in nuclear import of the pre-integration complex. Mg(2+) is required as a cofactor. Specific enzymatic cleavages by the viral protease yield mature proteins. The protease is released by autocatalytic cleavage. The polyprotein is cleaved during and after budding, this process is termed maturation. Proteolytic cleavage of p66 RT removes the RNase H domain to yield the p51 RT subunit. Nucleocapsid protein p7 might be further cleaved after virus entry. Post-translationally, tyrosine phosphorylated presumably in the virion by a host kinase. Phosphorylation is apparently not a major regulator of membrane association. In terms of processing, phosphorylated possibly by host MAPK1; this phosphorylation is necessary for Pin1-mediated virion uncoating. Methylated by host PRMT6, impairing its function by reducing RNA annealing and the initiation of reverse transcription.

The protein localises to the host cell membrane. The protein resides in the host endosome. Its subcellular location is the host multivesicular body. It localises to the virion membrane. It is found in the host nucleus. The protein localises to the host cytoplasm. The protein resides in the virion. It carries out the reaction Specific for a P1 residue that is hydrophobic, and P1' variable, but often Pro.. It catalyses the reaction Endohydrolysis of RNA in RNA/DNA hybrids. Three different cleavage modes: 1. sequence-specific internal cleavage of RNA. Human immunodeficiency virus type 1 and Moloney murine leukemia virus enzymes prefer to cleave the RNA strand one nucleotide away from the RNA-DNA junction. 2. RNA 5'-end directed cleavage 13-19 nucleotides from the RNA end. 3. DNA 3'-end directed cleavage 15-20 nucleotides away from the primer terminus.. The catalysed reaction is 3'-end directed exonucleolytic cleavage of viral RNA-DNA hybrid.. The enzyme catalyses DNA(n) + a 2'-deoxyribonucleoside 5'-triphosphate = DNA(n+1) + diphosphate. Protease: The viral protease is inhibited by many synthetic protease inhibitors (PIs), such as amprenavir, atazanavir, indinavir, loprinavir, nelfinavir, ritonavir and saquinavir. Use of protease inhibitors in tritherapy regimens permit more ambitious therapeutic strategies. Reverse transcriptase/ribonuclease H: RT can be inhibited either by nucleoside RT inhibitors (NRTIs) or by non nucleoside RT inhibitors (NNRTIs). NRTIs act as chain terminators, whereas NNRTIs inhibit DNA polymerization by binding a small hydrophobic pocket near the RT active site and inducing an allosteric change in this region. Classical NRTIs are abacavir, adefovir (PMEA), didanosine (ddI), lamivudine (3TC), stavudine (d4T), tenofovir (PMPA), zalcitabine (ddC), and zidovudine (AZT). Classical NNRTIs are atevirdine (BHAP U-87201E), delavirdine, efavirenz (DMP-266), emivirine (I-EBU), and nevirapine (BI-RG-587). The tritherapies used as a basic effective treatment of AIDS associate two NRTIs and one NNRTI. Functionally, mediates, with Gag polyprotein, the essential events in virion assembly, including binding the plasma membrane, making the protein-protein interactions necessary to create spherical particles, recruiting the viral Env proteins, and packaging the genomic RNA via direct interactions with the RNA packaging sequence (Psi). Gag-Pol polyprotein may regulate its own translation, by the binding genomic RNA in the 5'-UTR. At low concentration, the polyprotein would promote translation, whereas at high concentration, the polyprotein would encapsidate genomic RNA and then shut off translation. Its function is as follows. Targets the polyprotein to the plasma membrane via a multipartite membrane-binding signal, that includes its myristoylated N-terminus. Matrix protein is part of the pre-integration complex. Implicated in the release from host cell mediated by Vpu. Binds to RNA. Forms the conical core that encapsulates the genomic RNA-nucleocapsid complex in the virion. Most core are conical, with only 7% tubular. The core is constituted by capsid protein hexamer subunits. The core is disassembled soon after virion entry. Host restriction factors such as TRIM5-alpha or TRIMCyp bind retroviral capsids and cause premature capsid disassembly, leading to blocks in reverse transcription. Capsid restriction by TRIM5 is one of the factors which restricts HIV-1 to the human species. Host PIN1 apparently facilitates the virion uncoating. On the other hand, interactions with PDZD8 or CYPA stabilize the capsid. In terms of biological role, encapsulates and protects viral dimeric unspliced genomic RNA (gRNA). Binds these RNAs through its zinc fingers. Acts as a nucleic acid chaperone which is involved in rearangement of nucleic acid secondary structure during gRNA retrotranscription. Also facilitates template switch leading to recombination. As part of the polyprotein, participates in gRNA dimerization, packaging, tRNA incorporation and virion assembly. Functionally, aspartyl protease that mediates proteolytic cleavages of Gag and Gag-Pol polyproteins during or shortly after the release of the virion from the plasma membrane. Cleavages take place as an ordered, step-wise cascade to yield mature proteins. This process is called maturation. Displays maximal activity during the budding process just prior to particle release from the cell. Also cleaves Nef and Vif, probably concomitantly with viral structural proteins on maturation of virus particles. Hydrolyzes host EIF4GI and PABP1 in order to shut off the capped cellular mRNA translation. The resulting inhibition of cellular protein synthesis serves to ensure maximal viral gene expression and to evade host immune response. Also mediates cleavage of host YTHDF3. Mediates cleavage of host CARD8, thereby activating the CARD8 inflammasome, leading to the clearance of latent HIV-1 in patient CD4(+) T-cells after viral reactivation; in contrast, HIV-1 can evade CARD8-sensing when its protease remains inactive in infected cells prior to viral budding. Its function is as follows. Multifunctional enzyme that converts the viral RNA genome into dsDNA in the cytoplasm, shortly after virus entry into the cell. This enzyme displays a DNA polymerase activity that can copy either DNA or RNA templates, and a ribonuclease H (RNase H) activity that cleaves the RNA strand of RNA-DNA heteroduplexes in a partially processive 3' to 5' endonucleasic mode. Conversion of viral genomic RNA into dsDNA requires many steps. A tRNA(3)-Lys binds to the primer-binding site (PBS) situated at the 5'-end of the viral RNA. RT uses the 3' end of the tRNA primer to perform a short round of RNA-dependent minus-strand DNA synthesis. The reading proceeds through the U5 region and ends after the repeated (R) region which is present at both ends of viral RNA. The portion of the RNA-DNA heteroduplex is digested by the RNase H, resulting in a ssDNA product attached to the tRNA primer. This ssDNA/tRNA hybridizes with the identical R region situated at the 3' end of viral RNA. This template exchange, known as minus-strand DNA strong stop transfer, can be either intra- or intermolecular. RT uses the 3' end of this newly synthesized short ssDNA to perform the RNA-dependent minus-strand DNA synthesis of the whole template. RNase H digests the RNA template except for two polypurine tracts (PPTs) situated at the 5'-end and near the center of the genome. It is not clear if both polymerase and RNase H activities are simultaneous. RNase H probably can proceed both in a polymerase-dependent (RNA cut into small fragments by the same RT performing DNA synthesis) and a polymerase-independent mode (cleavage of remaining RNA fragments by free RTs). Secondly, RT performs DNA-directed plus-strand DNA synthesis using the PPTs that have not been removed by RNase H as primers. PPTs and tRNA primers are then removed by RNase H. The 3' and 5' ssDNA PBS regions hybridize to form a circular dsDNA intermediate. Strand displacement synthesis by RT to the PBS and PPT ends produces a blunt ended, linear dsDNA copy of the viral genome that includes long terminal repeats (LTRs) at both ends. Catalyzes viral DNA integration into the host chromosome, by performing a series of DNA cutting and joining reactions. This enzyme activity takes place after virion entry into a cell and reverse transcription of the RNA genome in dsDNA. The first step in the integration process is 3' processing. This step requires a complex comprising the viral genome, matrix protein, Vpr and integrase. This complex is called the pre-integration complex (PIC). The integrase protein removes 2 nucleotides from each 3' end of the viral DNA, leaving recessed CA OH's at the 3' ends. In the second step, the PIC enters cell nucleus. This process is mediated through integrase and Vpr proteins, and allows the virus to infect a non dividing cell. This ability to enter the nucleus is specific of lentiviruses, other retroviruses cannot and rely on cell division to access cell chromosomes. In the third step, termed strand transfer, the integrase protein joins the previously processed 3' ends to the 5' ends of strands of target cellular DNA at the site of integration. The 5'-ends are produced by integrase-catalyzed staggered cuts, 5 bp apart. A Y-shaped, gapped, recombination intermediate results, with the 5'-ends of the viral DNA strands and the 3' ends of target DNA strands remaining unjoined, flanking a gap of 5 bp. The last step is viral DNA integration into host chromosome. This involves host DNA repair synthesis in which the 5 bp gaps between the unjoined strands are filled in and then ligated. Since this process occurs at both cuts flanking the HIV genome, a 5 bp duplication of host DNA is produced at the ends of HIV-1 integration. Alternatively, Integrase may catalyze the excision of viral DNA just after strand transfer, this is termed disintegration. This is Gag-Pol polyprotein (gag-pol) from Human immunodeficiency virus type 1 group M subtype B (isolate JRCSF) (HIV-1).